The following is a 1213-amino-acid chain: DNA-directed RNA polymerase subunit beta' (1213 aa).

Zn(2+) contacts are provided by Cys60, Cys62, Cys75, and Cys78. 3 residues coordinate Mg(2+): Asp449, Asp451, and Asp453. Residues Cys818, Cys892, Cys899, and Cys902 each contribute to the Zn(2+) site.

This sequence belongs to the RNA polymerase beta' chain family. The RNAP catalytic core consists of 2 alpha, 1 beta, 1 beta' and 1 omega subunit. When a sigma factor is associated with the core the holoenzyme is formed, which can initiate transcription. The cofactor is Mg(2+). It depends on Zn(2+) as a cofactor.

It carries out the reaction RNA(n) + a ribonucleoside 5'-triphosphate = RNA(n+1) + diphosphate. In terms of biological role, DNA-dependent RNA polymerase catalyzes the transcription of DNA into RNA using the four ribonucleoside triphosphates as substrates. The polypeptide is DNA-directed RNA polymerase subunit beta' (Lactiplantibacillus plantarum (strain ATCC BAA-793 / NCIMB 8826 / WCFS1) (Lactobacillus plantarum)).